We begin with the raw amino-acid sequence, 677 residues long: DNA ligase (677 aa).

NAD(+) contacts are provided by residues aspartate 32–aspartate 36, serine 81–leucine 82, and glutamate 112. The active-site N6-AMP-lysine intermediate is the lysine 114. The NAD(+) site is built by arginine 135, glutamate 171, lysine 288, and lysine 312. 4 residues coordinate Zn(2+): cysteine 416, cysteine 419, cysteine 434, and cysteine 439. The BRCT domain maps to tyrosine 598–serine 677.

Belongs to the NAD-dependent DNA ligase family. LigA subfamily. Mg(2+) is required as a cofactor. Mn(2+) serves as cofactor.

It carries out the reaction NAD(+) + (deoxyribonucleotide)n-3'-hydroxyl + 5'-phospho-(deoxyribonucleotide)m = (deoxyribonucleotide)n+m + AMP + beta-nicotinamide D-nucleotide.. Functionally, DNA ligase that catalyzes the formation of phosphodiester linkages between 5'-phosphoryl and 3'-hydroxyl groups in double-stranded DNA using NAD as a coenzyme and as the energy source for the reaction. It is essential for DNA replication and repair of damaged DNA. The protein is DNA ligase of Dehalococcoides mccartyi (strain ATCC BAA-2266 / KCTC 15142 / 195) (Dehalococcoides ethenogenes (strain 195)).